We begin with the raw amino-acid sequence, 312 residues long: Probable deoxyhypusine synthase (312 aa).

The active-site Nucleophile is Lys-285.

It belongs to the deoxyhypusine synthase family. NAD(+) serves as cofactor.

It catalyses the reaction [eIF5A protein]-L-lysine + spermidine = [eIF5A protein]-deoxyhypusine + propane-1,3-diamine. Its pathway is protein modification; eIF5A hypusination. Its function is as follows. Catalyzes the NAD-dependent oxidative cleavage of spermidine and the subsequent transfer of the butylamine moiety of spermidine to the epsilon-amino group of a specific lysine residue of the eIF-5A precursor protein to form the intermediate deoxyhypusine residue. This is Probable deoxyhypusine synthase from Saccharolobus islandicus (strain M.16.4 / Kamchatka #3) (Sulfolobus islandicus).